Consider the following 100-residue polypeptide: Putative pterin-4-alpha-carbinolamine dehydratase (100 aa).

It belongs to the pterin-4-alpha-carbinolamine dehydratase family.

It catalyses the reaction (4aS,6R)-4a-hydroxy-L-erythro-5,6,7,8-tetrahydrobiopterin = (6R)-L-erythro-6,7-dihydrobiopterin + H2O. This is Putative pterin-4-alpha-carbinolamine dehydratase from Allorhizobium ampelinum (strain ATCC BAA-846 / DSM 112012 / S4) (Agrobacterium vitis (strain S4)).